Here is a 246-residue protein sequence, read N- to C-terminus: MEESLMDVPSTSGTQVYSRKARKRSHSPTKKLRYVKRRFSLLRPEDLSVIVQPTHYVRVTFSDPNMWYLRSGHHLHSVHNWLKPYGGQPVSEYHITLALLNLTDEDLARDFSPIALFLRNVRFELHEFALLRKTLVLNASEIYCANIHRFKPVYRVNTAIPTIKDWLLVQGFSLYHSGLPLHMSISKLHALDDVTRNYIITMPCFRTYPQQMFVTPLAVDVVSIRSSNQGNKQIVHSYPILHHPGF.

Residues methionine 1–proline 28 form a disordered region. Positions arginine 19–proline 28 are enriched in basic residues. The Nuclear localization motif motif lies at arginine 22 to arginine 38.

Interacts with host KPNA4; this interaction inhibits the nuclear import of NF-kappa-B complex.

Its subcellular location is the host nucleus. The protein localises to the host nucleolus. It localises to the host cytoplasm. Functionally, plays a role in the inhibition of host innate immunity by inhibiting the interaction between host IKBKE and MAVS. In turn, this inhibition prevents the production of host interferon beta. Additionally, inhibits host NF-kappa-B by interacting with host KPNA4 and thereby preventing the translocation of the NF-kappa-B complex into the nucleus by this importin. This Camelus dromedarius (Dromedary) protein is Non-structural protein ORF4b (ORF4b).